The chain runs to 904 residues: Endoplasmic reticulum metallopeptidase 1 (904 aa).

N-acetylmethionine is present on methionine 1. Residues 1–63 lie on the Cytoplasmic side of the membrane; that stretch reads MEWGSESAAV…PGGSGGASRG (63 aa). Positions 1-65 are disordered; it reads MEWGSESAAV…GSGGASRGAG (65 aa). The segment covering 55-65 has biased composition (gly residues); sequence GGSGGASRGAG. The helical transmembrane segment at 64–84 threads the bilayer; the sequence is AGTGLSEVRAALGLALYLIAL. The Lumenal portion of the chain corresponds to 85–399; the sequence is RTLVQLSLQQ…AASKYRHGNM (315 aa). Asparagine 182 carries N-linked (GlcNAc...) asparagine glycosylation. A disulfide bond links cysteine 204 and cysteine 222. The Zn(2+) site is built by histidine 205 and aspartate 217. The Proton acceptor role is filled by glutamate 251. Residues glutamate 252, glutamate 278, and histidine 354 each coordinate Zn(2+). The chain crosses the membrane as a helical span at residues 400-420; sequence VFFDVLGLFVIAYPSRIGSII. The Cytoplasmic segment spans residues 421 to 457; the sequence is NYMVVMGVVLYLGKKFLQPKHKTGNYKKDFLCGLGIT. A helical transmembrane segment spans residues 458–478; the sequence is LISWFTSLVTVLIIAVFISLI. Residues 479 to 489 are Lumenal-facing; that stretch reads GQSLSWYNHFY. Residues 490 to 510 form a helical membrane-spanning segment; sequence VSVCLYGTATVAKIILIHTLA. Topologically, residues 511 to 519 are cytoplasmic; sequence KRFYYMNAS. The helical transmembrane segment at 520-540 threads the bilayer; it reads AQYLGEVFFDISLFVHCCFLV. Position 541 (threonine 541) is a topological domain, lumenal. The helical transmembrane segment at 542–562 threads the bilayer; it reads LTYQGLCSAFISAVWVAFPLL. The Cytoplasmic portion of the chain corresponds to 563–579; it reads TKLCVHKDFKQHGAQGK. Residues 580–600 traverse the membrane as a helical segment; it reads FIAFYLLGMFIPYLYALYLIW. At 601–621 the chain is on the lumenal side; it reads AVFEMFTPILGRSGSEIPPDV. The helical transmembrane segment at 622–642 threads the bilayer; that stretch reads VLASILAGCTMILSSYFINFI. At 643-651 the chain is on the cytoplasmic side; that stretch reads YLAKSTKKT. A helical membrane pass occupies residues 652-672; the sequence is MLTLTLVCAITFLLVCSGTFF. The Lumenal segment spans residues 673–904; the sequence is PYSSNPANPK…WVCTYDLFVF (232 aa). N-linked (GlcNAc...) asparagine glycosylation occurs at asparagine 730.

It belongs to the peptidase M28 family. Requires Zn(2+) as cofactor.

It is found in the endoplasmic reticulum membrane. Its function is as follows. Within the ovary, required for the organization of somatic cells and oocytes into discrete follicular structures. The protein is Endoplasmic reticulum metallopeptidase 1 of Homo sapiens (Human).